A 291-amino-acid chain; its full sequence is Tyrosine recombinase XerD (291 aa).

The Core-binding (CB) domain maps to 1-82 (MEEGLIDRLL…ACKRLYIWME (82 aa)). The 183-residue stretch at 103–285 (NIPTLITEQQ…ANVWLQGVVK (183 aa)) folds into the Tyr recombinase domain. Catalysis depends on residues Arg143, Lys167, His237, Arg240, and His263. Tyr272 functions as the O-(3'-phospho-DNA)-tyrosine intermediate in the catalytic mechanism.

This sequence belongs to the 'phage' integrase family. XerD subfamily. As to quaternary structure, forms a cyclic heterotetrameric complex composed of two molecules of XerC and two molecules of XerD.

The protein localises to the cytoplasm. Its function is as follows. Site-specific tyrosine recombinase, which acts by catalyzing the cutting and rejoining of the recombining DNA molecules. The XerC-XerD complex is essential to convert dimers of the bacterial chromosome into monomers to permit their segregation at cell division. It also contributes to the segregational stability of plasmids. The polypeptide is Tyrosine recombinase XerD (Neisseria meningitidis serogroup A / serotype 4A (strain DSM 15465 / Z2491)).